The sequence spans 181 residues: Protein Syd (181 aa).

Belongs to the Syd family.

It localises to the cell inner membrane. In terms of biological role, interacts with the SecY protein in vivo. May bind preferentially to an uncomplexed state of SecY, thus functioning either as a chelating agent for excess SecY in the cell or as a regulatory factor that negatively controls the translocase function. This Escherichia coli (strain K12 / DH10B) protein is Protein Syd.